The following is a 767-amino-acid chain: V-set and immunoglobulin domain-containing protein 10-like 2 (767 aa).

Positions 1–28 are cleaved as a signal peptide; that stretch reads MVGQRAQHSPVSLLLLIHLCLLHLRASG. Ig-like domains are found at residues 34 to 140, 150 to 234, and 242 to 324; these read PEAP…SHLT, PQVR…AFLD, and PVIT…TTVQ. Disulfide bonds link cysteine 56/cysteine 122, cysteine 169/cysteine 217, and cysteine 268/cysteine 308. Residue asparagine 376 is glycosylated (N-linked (GlcNAc...) asparagine). Ig-like domains follow at residues 399 to 499 and 501 to 593; these read PALA…LQLE and PQLD…VLLE. Disulfide bonds link cysteine 435/cysteine 481 and cysteine 522/cysteine 577. The Fibronectin type-III domain occupies 599–699; sequence APPNVTISRL…EVKIPADPPF (101 aa). N-linked (GlcNAc...) asparagine glycosylation is found at asparagine 602 and asparagine 628. A helical transmembrane segment spans residues 704–724; the sequence is AVLGAAGTGMVVATVASLLVF. The segment at 735-754 is disordered; the sequence is PRLETPTTTPGLDPAQETTD. Positions 739–754 are enriched in polar residues; it reads TPTTTPGLDPAQETTD.

Its subcellular location is the membrane. In Homo sapiens (Human), this protein is V-set and immunoglobulin domain-containing protein 10-like 2.